Reading from the N-terminus, the 189-residue chain is UPF0301 protein CAB604 (189 aa).

The protein belongs to the UPF0301 (AlgH) family.

The polypeptide is UPF0301 protein CAB604 (Chlamydia abortus (strain DSM 27085 / S26/3) (Chlamydophila abortus)).